Here is a 517-residue protein sequence, read N- to C-terminus: Nectin-1 (517 aa).

The N-terminal stretch at 1 to 30 (MARMGLAGAAGRWWGLALGLTAFFLPGVHS) is a signal peptide. The 111-residue stretch at 31 to 141 (QVVQVNDSMY…GNRESQLNLT (111 aa)) folds into the Ig-like V-type domain. At 31–355 (QVVQVNDSMY…GRRAGPVPTA (325 aa)) the chain is on the extracellular side. Residues asparagine 36, asparagine 72, and asparagine 139 are each glycosylated (N-linked (GlcNAc...) asparagine). A disulfide bridge connects residues cysteine 51 and cysteine 124. 2 Ig-like C2-type domains span residues 149–238 (WIEG…FKES) and 247–334 (PEVT…VNIT). 2 disulfides stabilise this stretch: cysteine 172/cysteine 226 and cysteine 269/cysteine 316. N-linked (GlcNAc...) (complex) asparagine glycosylation occurs at asparagine 202. The interaction with FGFR stretch occupies residues 282–299 (WTTLNGSLPKGVEAQNRT). Residues asparagine 286, asparagine 297, asparagine 307, and asparagine 332 are each glycosylated (N-linked (GlcNAc...) asparagine). Residues 356-376 (IIGGVAGSILLVLIVVGGIVV) traverse the membrane as a helical segment. The Cytoplasmic segment spans residues 377 to 517 (ALRRRRHTFK…SFISKKEWYV (141 aa)). The disordered stretch occupies residues 399-488 (GYSKAGIPQH…DGYGDRTLGY (90 aa)). A phosphoserine mark is found at serine 422, serine 434, and serine 435. Tyrosine 436 is subject to Phosphotyrosine. Residues 436–445 (YEEEEEEEEG) show a composition bias toward acidic residues. The segment covering 449-466 (GERKVGGPHPKYDEDAKR) has biased composition (basic and acidic residues). Serine 511 is modified (phosphoserine).

Belongs to the nectin family. Cis- and trans-homodimer. Can form trans-heterodimers with NECTIN3 and with NECTIN4. Interaction between NECTIN1 and NECTIN3 on the pre- and postsynaptic sites, respectively, initiates the formation of puncta adherentia junctions between axons and dendrites. Interacts (via cytoplasmic domain) with AFDN (via PDZ domain); this interaction recruits NECTIN1 to cadherin-based adherens junctions and provides a connection with the actin cytoskeleton. Interacts with integrin alphaV/beta3. Interacts (via Ig-like C2-type domain 2) with FGFR1, FGFR2 and FGFR3. In terms of assembly, (Microbial infection) Interacts with herpes simplex virus 1/HHV-1, herpes simplex virus 2/HHV-2, and pseudorabies virus/PRV envelope glycoprotein D. In terms of processing, (Microbial infection) Ubiquitinated by CBL following infection by herpes simplex virus 1/HHV-1 and association with HHV-1 envelope glycoprotein D, leading to its removal from cell surface.

It is found in the cell membrane. The protein localises to the cell junction. Its subcellular location is the adherens junction. The protein resides in the presynaptic cell membrane. It localises to the secreted. Its function is as follows. Cell adhesion molecule that promotes cell-cell contacts and plays important roles in the development of the nervous system. Acts by forming homophilic or heterophilic trans-dimers. Heterophilic interactions have been detected between NECTIN1 and NECTIN3 and between NECTIN1 and NECTIN4. Involved in axon guidance by promoting contacts between the commissural axons and the floor plate cells. Involved in synaptogegesis. Has some neurite outgrowth-promoting activity. Promotes formation of checkerboard-like cellular pattern of hair cells and supporting cells in the auditory epithelium via heterophilic interaction with NECTIN3: NECTIN1 is present in the membrane of hair cells and associates with NECTIN3 on supporting cells, thereby mediating heterotypic adhesion between these two cell types. Required for enamel mineralization. In terms of biological role, (Microbial infection) Acts as a receptor for herpes simplex virus 1/HHV-1, herpes simplex virus 2/HHV-2, and pseudorabies virus/PRV. Constitutes the major receptor for herpes simplex virus 1/HHV-1 entry into host cells. This is Nectin-1 from Homo sapiens (Human).